The following is a 173-amino-acid chain: Signal peptidase complex catalytic subunit sec11 (173 aa).

At 1–15 (MLGIADMQPRQLAAQ) the chain is on the cytoplasmic side. Residues 16–36 (ILNFALVLSTAFMMWKGLSVV) traverse the membrane as a helical; Signal-anchor for type II membrane protein segment. Residues 37 to 173 (SDSPSPIVVV…MGVMVVLQRE (137 aa)) lie on the Lumenal side of the membrane. Active-site charge relay system residues include Ser50, His89, and Asp115. A C-terminal short (CTS) helix region spans residues 159 to 170 (VMLGLMGVMVVL).

This sequence belongs to the peptidase S26B family. As to quaternary structure, component of the signal peptidase complex (SPC) composed of a catalytic subunit SEC11 and three accessory subunits SPC1, SPC2 and SPC3. The complex induces a local thinning of the ER membrane which is used to measure the length of the signal peptide (SP) h-region of protein substrates. This ensures the selectivity of the complex towards h-regions shorter than 18-20 amino acids. SPC associates with the translocon complex.

The protein resides in the endoplasmic reticulum membrane. The catalysed reaction is Cleavage of hydrophobic, N-terminal signal or leader sequences from secreted and periplasmic proteins.. Functionally, catalytic component of the signal peptidase complex (SPC) which catalyzes the cleavage of N-terminal signal sequences from nascent proteins as they are translocated into the lumen of the endoplasmic reticulum. Specifically cleaves N-terminal signal peptides that contain a hydrophobic alpha-helix (h-region) shorter than 18-20 amino acids. In Pyrenophora tritici-repentis (strain Pt-1C-BFP) (Wheat tan spot fungus), this protein is Signal peptidase complex catalytic subunit sec11 (sec11).